A 431-amino-acid polypeptide reads, in one-letter code: 4-hydroxy-3-methylbut-2-en-1-yl diphosphate synthase (flavodoxin) (431 aa).

Residues Cys310, Cys313, Cys356, and Glu363 each coordinate [4Fe-4S] cluster.

The protein belongs to the IspG family. [4Fe-4S] cluster serves as cofactor.

It carries out the reaction (2E)-4-hydroxy-3-methylbut-2-enyl diphosphate + oxidized [flavodoxin] + H2O + 2 H(+) = 2-C-methyl-D-erythritol 2,4-cyclic diphosphate + reduced [flavodoxin]. It functions in the pathway isoprenoid biosynthesis; isopentenyl diphosphate biosynthesis via DXP pathway; isopentenyl diphosphate from 1-deoxy-D-xylulose 5-phosphate: step 5/6. Converts 2C-methyl-D-erythritol 2,4-cyclodiphosphate (ME-2,4cPP) into 1-hydroxy-2-methyl-2-(E)-butenyl 4-diphosphate. In Rhodopseudomonas palustris (strain HaA2), this protein is 4-hydroxy-3-methylbut-2-en-1-yl diphosphate synthase (flavodoxin).